Consider the following 261-residue polypeptide: Transmembrane protein 106A (261 aa).

Residues 1-23 (MGKAVSQLTSRKDEDKPILPDNP) form a disordered region. The chain crosses the membrane as a helical span at residues 93-113 (LFVFLSVAICLLIFSLTIFFL).

The protein belongs to the TMEM106 family. As to expression, expressed in liver, spleen, lung, kidney, lymph nodes and adipose tissue (at protein level). Expressed by macrophages.

It localises to the cell membrane. In terms of biological role, activates macrophages and polarizes them into M1-like macrophages through the activation of the MAPK and NF-kappaB signaling pathway. Upon activation, up-regulates the expression of CD80, CD86, CD69 and MHC II on macrophages, and induces the release of pro-inflammatory cytokines such as TNF, IL1B, IL6, CCL2 and nitric oxide. May play a role in inhibition of proliferation and migration. The protein is Transmembrane protein 106A (Tmem106a) of Mus musculus (Mouse).